A 255-amino-acid chain; its full sequence is Type III pantothenate kinase (255 aa).

6 to 13 contributes to the ATP binding site; that stretch reads DVGNTNIV. Residues Tyr-100 and 107-110 each bind substrate; that span reads GADR. The active-site Proton acceptor is Asp-109. Residue Asp-129 coordinates K(+). Residue Thr-132 coordinates ATP. Thr-184 contacts substrate.

The protein belongs to the type III pantothenate kinase family. As to quaternary structure, homodimer. Requires NH4(+) as cofactor. It depends on K(+) as a cofactor.

The protein localises to the cytoplasm. The enzyme catalyses (R)-pantothenate + ATP = (R)-4'-phosphopantothenate + ADP + H(+). The protein operates within cofactor biosynthesis; coenzyme A biosynthesis; CoA from (R)-pantothenate: step 1/5. Functionally, catalyzes the phosphorylation of pantothenate (Pan), the first step in CoA biosynthesis. This chain is Type III pantothenate kinase, found in Caldanaerobacter subterraneus subsp. tengcongensis (strain DSM 15242 / JCM 11007 / NBRC 100824 / MB4) (Thermoanaerobacter tengcongensis).